The primary structure comprises 715 residues: Polyribonucleotide nucleotidyltransferase (715 aa).

Mg(2+) contacts are provided by Asp498 and Asp504. One can recognise a KH domain in the interval 565–625 (PKVCMMQIKP…ETVKKTVAFI (61 aa)). In terms of domain architecture, S1 motif spans 635 to 709 (GTCYQASILR…RIDFLLLPKK (75 aa)).

This sequence belongs to the polyribonucleotide nucleotidyltransferase family. It depends on Mg(2+) as a cofactor.

The protein localises to the cytoplasm. It carries out the reaction RNA(n+1) + phosphate = RNA(n) + a ribonucleoside 5'-diphosphate. Involved in mRNA degradation. Catalyzes the phosphorolysis of single-stranded polyribonucleotides processively in the 3'- to 5'-direction. This is Polyribonucleotide nucleotidyltransferase from Aster yellows witches'-broom phytoplasma (strain AYWB).